Consider the following 1274-residue polypeptide: ABC multidrug transporter E (1274 aa).

Asn48 is a glycosylation site (N-linked (GlcNAc...) asparagine). An ABC transmembrane type-1 1 domain is found at 120–344 (FCFRVTGLRV…IASPLIIVSK (225 aa)). Helical transmembrane passes span 183-203 (LALL…LTLV), 205-225 (SSAL…MTKI), 280-300 (IFGI…SLAF), and 321-341 (VFFS…PLII). An ABC transporter 1 domain is found at 377–629 (IIFRDVRFTY…EGGVYRDLVN (253 aa)). 412 to 419 (GPSGSGKS) lines the ATP pocket. Residues Asn473 and Asn580 are each glycosylated (N-linked (GlcNAc...) asparagine). 2 helical membrane passes run 697-717 (VAVL…SWLF) and 737-757 (FWAL…STVG). Residues 697-984 (VAVLISTAGA…FFSFASNFAQ (288 aa)) form the ABC transmembrane type-1 2 domain. Asn792 is a glycosylation site (N-linked (GlcNAc...) asparagine). 3 consecutive transmembrane segments (helical) span residues 818–838 (FPLI…SFGW), 840–860 (LSLV…FMRI), and 924–944 (LIFA…FWYG). Residues 1023–1269 (VEFHDVSFRY…KGTYWQMVSS (247 aa)) form the ABC transporter 2 domain. Residue Asn1044 is glycosylated (N-linked (GlcNAc...) asparagine). Residue 1057–1064 (GPSGCGKT) coordinates ATP. The N-linked (GlcNAc...) asparagine glycan is linked to Asn1117.

This sequence belongs to the ABC transporter superfamily. ABCB family. Multidrug resistance exporter (TC 3.A.1.201) subfamily.

Its subcellular location is the cell membrane. In terms of biological role, pleiotropic ABC efflux transporter that may be involved in A.fumigatus adaptation to azoles such as vorizonazole. The protein is ABC multidrug transporter E of Aspergillus fumigatus (strain ATCC MYA-4609 / CBS 101355 / FGSC A1100 / Af293) (Neosartorya fumigata).